The chain runs to 211 residues: Adenylyl-sulfate kinase (211 aa).

32–39 is an ATP binding site; that stretch reads GLSASGKS. The active-site Phosphoserine intermediate is S107.

The protein belongs to the APS kinase family. As to quaternary structure, homodimer.

It catalyses the reaction adenosine 5'-phosphosulfate + ATP = 3'-phosphoadenylyl sulfate + ADP + H(+). It participates in sulfur metabolism; hydrogen sulfide biosynthesis; sulfite from sulfate: step 2/3. In terms of biological role, catalyzes the synthesis of activated sulfate. This chain is Adenylyl-sulfate kinase, found in Penicillium chrysogenum (Penicillium notatum).